Here is a 502-residue protein sequence, read N- to C-terminus: ATP synthase subunit alpha (502 aa).

169 to 176 serves as a coordination point for ATP; it reads GDRQTGKT.

It belongs to the ATPase alpha/beta chains family. As to quaternary structure, F-type ATPases have 2 components, CF(1) - the catalytic core - and CF(0) - the membrane proton channel. CF(1) has five subunits: alpha(3), beta(3), gamma(1), delta(1), epsilon(1). CF(0) has three main subunits: a(1), b(2) and c(9-12). The alpha and beta chains form an alternating ring which encloses part of the gamma chain. CF(1) is attached to CF(0) by a central stalk formed by the gamma and epsilon chains, while a peripheral stalk is formed by the delta and b chains.

It is found in the cell inner membrane. The enzyme catalyses ATP + H2O + 4 H(+)(in) = ADP + phosphate + 5 H(+)(out). Produces ATP from ADP in the presence of a proton gradient across the membrane. The alpha chain is a regulatory subunit. This is ATP synthase subunit alpha from Kosmotoga olearia (strain ATCC BAA-1733 / DSM 21960 / TBF 19.5.1).